The following is a 152-amino-acid chain: Clitocypin-5 (152 aa).

As to quaternary structure, homodimer.

In terms of biological role, binds and inhibits cysteine proteinases. Inhibits most strongly papain and cathepsin L, more weakly bromelain and cathepsin B while it is completely ineffective against cathepsin H. The protein is Clitocypin-5 (clt5) of Clitocybe nebularis (Clouded agaric).